A 1527-amino-acid polypeptide reads, in one-letter code: MSIRLPHSIDRSASKKQSHLSSPIASWLSSLSSLGDSTPERTSPSHHRQPSDTSETTAGLVQRCVIIQKDQHGFGFTVSGDRIVLVQSVRPGGAAMKAGVKEGDRIIKVNGTMVTNSSHLEVVKLIKSGAYAALTLLGSSPPSVGVSGLQQNPSVAGVLRVNPIIPPPPPPPPLPPPQHITGPKPLQDPEVQKHATQILWNMLRQEEEELQDILPPCGETSQRTCEGRLSVDSQEADSGLDSGTERFPSISESLMNRNSVLSDPGLDSPQTSPVILARVAQHHRRQGSDAALLPLNHQGIDQSPKPLIIGPEEDYDPGYFNNESDIIFQDLEKLKSHPAYLVVFLRYILSQADPGPLLFYLCSEVYQQTNPKDSRSLGKDIWNIFLEKNAPLRVKIPEMLQAEIDLRLRNNEDPRNVLCEAQEAVMLEIQEQINDYRSKRTLGLGSLYGENDLLGLDGDPLRERQMAEKQLAALGDILSKYEEDRSAPMDFAVNTFMSHAGIRLRESRSSCTAEKTQSAPDKDKWLPFFPKTKKQSSNSKKEKDALEDKKRNPILRYIGKPKSSSQSIKPGNVRNIIQHFENSHQYDVPEPGTQRLSTGSFPEDLLESDSSRSEIRLGRSGSLKGREEMKRSRKAENVPRPRSDVDMDAAAEAARLHQSASSSASSLSTRSLENPTPPFTPKMGRRSIESPNLGFCTDVILPHLLEDDLGQLSDLEPEPEVQNWQHTVGKDVVANLTQREIDRQEVINELFVTEASHLRTLRVLDLIFYQRMRKENLMPREELARLFPNLPELIEIHNSWCEAMKKLREEGPIIRDISDPMLARFDGPAREELQQVAAQFCSYQSVALELIRTKQRKESRFQLFMQEAESHPQCRRLQLRDLIVSEMQRLTKYPLLLENIIKHTEGGTSEHEKLCRARDQCREILKFVNEAVKQTENRHRLEGYQKRLDATALERASNPLAAEFKSLDLTTRKMIHEGPLTWRISKDKTLDLQVLLLEDLVVLLQRQEERLLLKCHSKTAVGSSDSKQTFSPVLKLNAVLIRSVATDKRAFFIICTSELGPPQIYELVALTSSDKNIWMELLEEAVQNATKHPGAAPIPIHPSPPGSQEPAYQGSTSSRVEINDSEVYHTEKEPKKLPEGPGPEQRVQDKQLIAQGEPVQEEDEEELRTLPRAPPSLDGENRGIRTRDPVLLALTGPLLMEGLADAALEDVENLRHLILWSLLPGHTVKTQAAGEPEDDLTPTPSVVSITSHPWDPGSPGQAPTISDSTRLARPEGSQPEGEDVAVSSLAHLPPRTRSSGVWDSPELDRNPAAEAASTEPAASYKVVRKVSLLPGGGVGAAKVAGSNAIPDSGQSESELSEVEGGAQATGNCFYVSMPAGPLDSSTEPTGTPPSPSQCHSLPAWPTEPQPYRGVRGGQCSSLVRRDVDVIFHTIEQLTIKLHRLKDMELAHRELLKSLGGESSGGTTPVGSFHTEAARWTDYSLSPPAKEALASDSQNGQEQGSCPEEGSDIALEDSATDTAVSPGP.

The interval 1-56 (MSIRLPHSIDRSASKKQSHLSSPIASWLSSLSSLGDSTPERTSPSHHRQPSDTSET) is disordered. Phosphoserine occurs at positions 2, 30, 32, and 51. Low complexity predominate over residues 19 to 37 (HLSSPIASWLSSLSSLGDS). A PDZ domain is found at 64 to 143 (CVIIQKDQHG…LTLLGSSPPS (80 aa)). The tract at residues 216–247 (PCGETSQRTCEGRLSVDSQEADSGLDSGTERF) is disordered. A phosphoserine mark is found at Ser262 and Ser268. Thr271 carries the phosphothreonine modification. Phosphoserine occurs at positions 272 and 288. One can recognise an RGSL domain in the interval 323–503 (ESDIIFQDLE…NTFMSHAGIR (181 aa)). Residues 461 to 487 (LRERQMAEKQLAALGDILSKYEEDRSA) adopt a coiled-coil conformation. 2 disordered regions span residues 506–569 (ESRS…QSIK) and 582–687 (NSHQ…GRRS). The segment covering 509 to 519 (SSCTAEKTQSA) has biased composition (polar residues). Composition is skewed to basic and acidic residues over residues 539 to 551 (SKKE…DKKR) and 624 to 645 (KGRE…RSDV). Phosphoserine occurs at positions 643 and 671. The span at 656-672 (LHQSASSSASSLSTRSL) shows a compositional bias: low complexity. Phosphothreonine is present on residues Thr676 and Thr680. Residues 742 to 931 (DRQEVINELF…REILKFVNEA (190 aa)) enclose the DH domain. The PH domain occupies 973–1087 (KMIHEGPLTW…WMELLEEAVQ (115 aa)). Disordered regions lie at residues 1090-1184 (TKHP…NRGI), 1231-1321 (QAAG…TEPA), and 1379-1411 (AGPL…PQPY). Positions 1126–1138 (EVYHTEKEPKKLP) are enriched in basic and acidic residues. Over residues 1242–1251 (PTPSVVSITS) the composition is skewed to polar residues. Phosphoserine is present on residues Ser1299 and Ser1304. Over residues 1312-1321 (AAEAASTEPA) the composition is skewed to low complexity. 2 positions are modified to phosphoserine: Ser1462 and Ser1463. Thr1467 and Thr1480 each carry phosphothreonine. The tract at residues 1480-1527 (TDYSLSPPAKEALASDSQNGQEQGSCPEEGSDIALEDSATDTAVSPGP) is disordered. Phosphoserine is present on Ser1485. Residues 1494-1503 (SDSQNGQEQG) are compositionally biased toward polar residues. The span at 1508–1518 (EGSDIALEDSA) shows a compositional bias: acidic residues.

As to quaternary structure, interacts with RHOA, GNA13 and SLC1A6. Interacts with GNA12, PLXNB1 and PLXNB2. Interacts (via DH domain) with GCSAM (via C-terminus). Found in a complex with ARHGEF11 and ARHGEF12; binding to ARHGEF11 and ARHGEF12 enhances CDC42 GEF activity of PLEKHG4B, and PLEKHG4B, in turn, inhibits ARHGEF11- and ARHGEF12-mediated RHOA activation. Post-translationally, phosphorylated by MAP kinase p38 (MAPK11, MAPK12, MAPK13 and/or MAPK14). Ubiquitinated by the BCR(KLHL20) E3 ubiquitin ligase complex when previously phosphorylated by MAP kinase p38 (MAPK11, MAPK12, MAPK13 and/or MAPK14), leading to its degradation, thereby restricting RhoA activity and facilitating growth cone spreading and neurite outgrowth.

It localises to the cytoplasm. It is found in the membrane. May play a role in the regulation of RhoA GTPase by guanine nucleotide-binding alpha-12 (GNA12) and alpha-13 (GNA13). Acts as guanine nucleotide exchange factor (GEF) for RhoA GTPase and may act as GTPase-activating protein (GAP) for GNA12 and GNA13. Involved in neurotrophin-induced neurite outgrowth. In Rattus norvegicus (Rat), this protein is Rho guanine nucleotide exchange factor 11 (Arhgef11).